The primary structure comprises 960 residues: Chromo domain-containing protein 1 (960 aa).

The Chromo domain maps to 22-74 (YEVEDILADRVNKNGINEYYIKWAGYDWYDNTWEPEQNLFGAEKVLKKWKKRK).

In terms of assembly, ago1, chp1 and tas3 interact to form the core of the RNA-induced transcriptional silencing (RITS) complex. The RITS complex interacts with the RDRC complex via interaction between ago1 and hrr1. Clr4 has a role in mediating this interaction. Interacts with dri1.

The protein resides in the nucleus. The protein localises to the cytoplasm. It localises to the cytoskeleton. Its subcellular location is the microtubule organizing center. It is found in the spindle pole body. Functionally, component of the kinetochore which plays a role in stabilizing microtubules and so allowing accurate chromosome segregation. Has a role in the RNA interference (RNAi) pathway which is important for heterochromatin formation and accurate chromosome segregation. A member of the RNA-induced transcriptional silencing (RITS) complex which is involved in the biosynthesis of dsRNA from primer siRNAs provided by the RNA-directed RNA polymerase (RDRC) complex. This chain is Chromo domain-containing protein 1, found in Schizosaccharomyces pombe (strain 972 / ATCC 24843) (Fission yeast).